Reading from the N-terminus, the 1011-residue chain is MKLTKAVFRFRRTNLSTLLVITYLVITTLYVWDHFRYHFTLPSDYNYAQMLADAWLDLEIITQYPHPYASHANDKVHDYLLDRVKEITRDSMFAEISDDYGMGLRTLFRQEDAISGTKESTVVYYESSNVLARVQGRNSALDGLLLSAHYDSVPSGYGATDDGMGVVSMLAILTHYVKNQPERTLVFNFNNNQEFGLAGASAFFEHPWSKEISYVINLEGTGAGGKAVLFRTSDVSTAQVYAEAVRQQPFGNSMYQQGFYNGHIGTETDFQVYEDQGLRGWDIAFYRPRNLYHTAKDTVLYTSKQALWHMLHTALQLTDYMAINKPDMEDTSNAVYFDLFGKWFVVWSARSLFYWNCIILALFPSILAILFLVAYDMQLLKFNFWDAMLRLPVSVCLAYFCVKLFQVLVGQLNPYVFSRDYVSPILAEASMFIFMNYVILSSWERLRPLRDFKTVALVEVSMVLWIYLISVTRWLRDSDYTATGLYPFTIGYTFVSIGAIIGVFCATFKAKLNPEDDSYVGDSKVDIEQQQMLMQHQYQQHSQKHSNQHSPHHSTHHSAQHSVHHSPRQSIHQVPSSEQRQRDASETPHVIISVDHTAGHQEDSEVTPLLNTGTVAPFPKPVPERVSRKSFLRNVVTSILNYDWSIQFMVVTPWVTYFTWICLDLIMGAMNQTIQESAKGTTFVTHMALIGSLLLSLPMLPFTYKLHSFAGMLFLLLAVTTAVWTIVAPPFTESSPLKLRFLQTIDLDKNNSSSVYLYGRERTFMEPILDDIPSVTKYRCVEYAGDGVDICEYNGMPPRMFNNHHEAESDWTKIMTLEILKDDRNSTSRTPYQPITAELKINVEENRVCTLNFNSTAFKNWKQGVSPLREVVILHENPSSNVTPSFYNTAMKNGYYQDEFGNDHYRWNNGITELQLHKLDFKRGYYKIGLEWIPQLLYRGYDPATSSSEEDDALGVSVTCYWGEYDTDSITDGFATTNVPAYDELRKYSPKNIIYSSKEKGMVSVTKYVEL.

Residues 1 to 14 (MKLTKAVFRFRRTN) are Cytoplasmic-facing. Residues 15–35 (LSTLLVITYLVITTLYVWDHF) form a helical membrane-spanning segment. At 36–352 (RYHFTLPSDY…WFVVWSARSL (317 aa)) the chain is on the vacuolar side. Zn(2+)-binding residues include histidine 149, aspartate 161, glutamate 194, glutamate 219, and histidine 293. The helical transmembrane segment at 353 to 373 (FYWNCIILALFPSILAILFLV) threads the bilayer. At 374–390 (AYDMQLLKFNFWDAMLR) the chain is on the cytoplasmic side. Residues 391–411 (LPVSVCLAYFCVKLFQVLVGQ) form a helical membrane-spanning segment. The Vacuolar segment spans residues 412-420 (LNPYVFSRD). Residues 421–441 (YVSPILAEASMFIFMNYVILS) form a helical membrane-spanning segment. Over 442 to 451 (SWERLRPLRD) the chain is Cytoplasmic. A helical transmembrane segment spans residues 452 to 472 (FKTVALVEVSMVLWIYLISVT). Residues 473-487 (RWLRDSDYTATGLYP) are Vacuolar-facing. The chain crosses the membrane as a helical span at residues 488–508 (FTIGYTFVSIGAIIGVFCATF). At 509–647 (KAKLNPEDDS…SILNYDWSIQ (139 aa)) the chain is on the cytoplasmic side. The disordered stretch occupies residues 534–585 (MQHQYQQHSQKHSNQHSPHHSTHHSAQHSVHHSPRQSIHQVPSSEQRQRDAS). Over residues 542–567 (SQKHSNQHSPHHSTHHSAQHSVHHSP) the composition is skewed to basic residues. Polar residues predominate over residues 568–578 (RQSIHQVPSSE). The chain crosses the membrane as a helical span at residues 648–668 (FMVVTPWVTYFTWICLDLIMG). Residues 669–681 (AMNQTIQESAKGT) lie on the Vacuolar side of the membrane. Asparagine 671 is a glycosylation site (N-linked (GlcNAc...) asparagine). The helical transmembrane segment at 682–702 (TFVTHMALIGSLLLSLPMLPF) threads the bilayer. Residues 703–708 (TYKLHS) lie on the Cytoplasmic side of the membrane. Residues 709 to 729 (FAGMLFLLLAVTTAVWTIVAP) traverse the membrane as a helical segment. Residues 730–1011 (PFTESSPLKL…MVSVTKYVEL (282 aa)) are Vacuolar-facing. Asparagine 751, asparagine 825, and asparagine 854 each carry an N-linked (GlcNAc...) asparagine glycan.

Belongs to the peptidase M28 family. The cofactor is Zn(2+).

The protein localises to the vacuole membrane. May be involved in vacuolar sorting and osmoregulation. In Eremothecium gossypii (strain ATCC 10895 / CBS 109.51 / FGSC 9923 / NRRL Y-1056) (Yeast), this protein is Vacuolar membrane protease.